Reading from the N-terminus, the 518-residue chain is 2-isopropylmalate synthase (518 aa).

The region spanning 5–269 (IIVLDTTLRD…STNVRLKELI (265 aa)) is the Pyruvate carboxyltransferase domain. Mn(2+) contacts are provided by Asp14, His204, His206, and Asn240. The tract at residues 397 to 518 (ELDSFQVVTN…HDSQAPVSAR (122 aa)) is regulatory domain.

Belongs to the alpha-IPM synthase/homocitrate synthase family. LeuA type 1 subfamily. As to quaternary structure, homodimer. The cofactor is Mn(2+).

The protein localises to the cytoplasm. It catalyses the reaction 3-methyl-2-oxobutanoate + acetyl-CoA + H2O = (2S)-2-isopropylmalate + CoA + H(+). Its pathway is amino-acid biosynthesis; L-leucine biosynthesis; L-leucine from 3-methyl-2-oxobutanoate: step 1/4. In terms of biological role, catalyzes the condensation of the acetyl group of acetyl-CoA with 3-methyl-2-oxobutanoate (2-ketoisovalerate) to form 3-carboxy-3-hydroxy-4-methylpentanoate (2-isopropylmalate). This is 2-isopropylmalate synthase from Geobacillus sp. (strain Y412MC10).